Consider the following 496-residue polypeptide: Cytochrome P450 71D181 (496 aa).

Residues 1–21 (MDISISWVAIILVISSYFIFM) traverse the membrane as a helical; Signal-anchor for type II membrane protein segment. Cys435 provides a ligand contact to heme. The interval 471–496 (MSETPGLSGPRKNPLIMVPTIHNPTS) is disordered.

Belongs to the cytochrome P450 family. It depends on heme as a cofactor. In terms of tissue distribution, expressed at low levels in flowers, leaves and stems.

It is found in the membrane. The enzyme catalyses alpha-terpinene + 2 reduced [NADPH--hemoprotein reductase] + 2 O2 = carvacrol + 2 oxidized [NADPH--hemoprotein reductase] + 3 H2O + 2 H(+). It catalyses the reaction gamma-terpinene + 2 reduced [NADPH--hemoprotein reductase] + 2 O2 = carvacrol + 2 oxidized [NADPH--hemoprotein reductase] + 3 H2O + 2 H(+). The catalysed reaction is (4S)-limonene + reduced [NADPH--hemoprotein reductase] + O2 = (1S,5R)-carveol + oxidized [NADPH--hemoprotein reductase] + H2O + H(+). It carries out the reaction (4R)-limonene + reduced [NADPH--hemoprotein reductase] + O2 = (1R,5S)-carveol + oxidized [NADPH--hemoprotein reductase] + H2O + H(+). The protein operates within secondary metabolite biosynthesis; terpenoid biosynthesis. In terms of biological role, involved in the biosynthesis of phenolic monoterpenes natural products thymol and carvacrol which have a broad range of biological activities acting as antimicrobial compounds, insecticides, antioxidants and pharmaceutical agents. Catalyzes the C2-hydroxylation of gamma-terpinene and alpha-terpinene to produce carvacrol. Also mediates the C6-hydroxylation of (4S)-limonene and (4R)-limonene to form carveol. The polypeptide is Cytochrome P450 71D181 (Origanum vulgare (Wild marjoram)).